The following is a 184-amino-acid chain: Putative tetraheme cytochrome-c type (184 aa).

The Cytoplasmic portion of the chain corresponds to 1 to 14 (MSKHAASSAKRFSL). The helical transmembrane segment at 15–35 (LALGLMFVGGIVFVWAVDFGI) threads the bilayer. Over 36 to 184 (KTTNTLEFCT…HEPTEPDDAS (149 aa)) the chain is Periplasmic. Heme-binding residues include Cys-44, Cys-47, Met-50, Cys-73, Cys-76, and His-77. Substrate is bound by residues Lys-89 and Asp-95. Residues Asp-95, Cys-133, Cys-136, His-137, Cys-165, Cys-168, His-169, and His-174 each coordinate heme.

Belongs to the NapC/NirT/NrfH family. Binds 4 heme groups per subunit.

It is found in the cell inner membrane. The polypeptide is Putative tetraheme cytochrome-c type (Allochromatium vinosum (strain ATCC 17899 / DSM 180 / NBRC 103801 / NCIMB 10441 / D) (Chromatium vinosum)).